Here is a 499-residue protein sequence, read N- to C-terminus: uncharacterized protein (499 aa).

Residues 10 to 57 (CGICGQEYSEDEKLLIPRILTECGHTICTGCAGKIKGQSSIIACPFDR) form an RING-type; degenerate zinc finger. The B box-type; degenerate zinc finger occupies 101–147 (NKNGVCDENTNHHASNYCETCDADLCEECWTWIHSISTLAHHEKKMI).

This is an uncharacterized protein from Caenorhabditis elegans.